The sequence spans 125 residues: Large ribosomal subunit protein bL12 (125 aa).

The protein belongs to the bacterial ribosomal protein bL12 family. In terms of assembly, homodimer. Part of the ribosomal stalk of the 50S ribosomal subunit. Forms a multimeric L10(L12)X complex, where L10 forms an elongated spine to which 2 to 4 L12 dimers bind in a sequential fashion. Binds GTP-bound translation factors.

Functionally, forms part of the ribosomal stalk which helps the ribosome interact with GTP-bound translation factors. Is thus essential for accurate translation. This chain is Large ribosomal subunit protein bL12, found in Anaeromyxobacter sp. (strain Fw109-5).